A 130-amino-acid polypeptide reads, in one-letter code: Small ribosomal subunit protein uS11 (130 aa).

It belongs to the universal ribosomal protein uS11 family. As to quaternary structure, part of the 30S ribosomal subunit. Interacts with proteins S7 and S18. Binds to IF-3.

Located on the platform of the 30S subunit, it bridges several disparate RNA helices of the 16S rRNA. Forms part of the Shine-Dalgarno cleft in the 70S ribosome. This is Small ribosomal subunit protein uS11 from Shewanella denitrificans (strain OS217 / ATCC BAA-1090 / DSM 15013).